Here is a 267-residue protein sequence, read N- to C-terminus: 4-hydroxy-tetrahydrodipicolinate reductase (267 aa).

NAD(+) is bound by residues 9–14 and aspartate 35; that span reads GASGRM. Residue arginine 36 coordinates NADP(+). NAD(+)-binding positions include 98–100 and 122–125; these read GTT and ASNF. Histidine 155 serves as the catalytic Proton donor/acceptor. (S)-2,3,4,5-tetrahydrodipicolinate is bound at residue histidine 156. Lysine 159 acts as the Proton donor in catalysis. (S)-2,3,4,5-tetrahydrodipicolinate is bound at residue 165–166; that stretch reads GT.

This sequence belongs to the DapB family.

The protein localises to the cytoplasm. The catalysed reaction is (S)-2,3,4,5-tetrahydrodipicolinate + NAD(+) + H2O = (2S,4S)-4-hydroxy-2,3,4,5-tetrahydrodipicolinate + NADH + H(+). It catalyses the reaction (S)-2,3,4,5-tetrahydrodipicolinate + NADP(+) + H2O = (2S,4S)-4-hydroxy-2,3,4,5-tetrahydrodipicolinate + NADPH + H(+). It functions in the pathway amino-acid biosynthesis; L-lysine biosynthesis via DAP pathway; (S)-tetrahydrodipicolinate from L-aspartate: step 4/4. Its function is as follows. Catalyzes the conversion of 4-hydroxy-tetrahydrodipicolinate (HTPA) to tetrahydrodipicolinate. This chain is 4-hydroxy-tetrahydrodipicolinate reductase, found in Chromobacterium violaceum (strain ATCC 12472 / DSM 30191 / JCM 1249 / CCUG 213 / NBRC 12614 / NCIMB 9131 / NCTC 9757 / MK).